The primary structure comprises 447 residues: Tubulin beta-1 chain (447 aa).

Residue glutamine 11 coordinates GTP. Phosphoserine is present on serine 40. GTP-binding residues include glutamate 69, serine 138, glycine 142, threonine 143, glycine 144, asparagine 204, and asparagine 226. Glutamate 69 contributes to the Mg(2+) binding site. Serine 339 bears the Phosphoserine mark. A disordered region spans residues 427-447 (EATADEDAEFEEEQEAEVDEN). Residues 429–447 (TADEDAEFEEEQEAEVDEN) are compositionally biased toward acidic residues.

The protein belongs to the tubulin family. Dimer of alpha and beta chains. A typical microtubule is a hollow water-filled tube with an outer diameter of 25 nm and an inner diameter of 15 nM. Alpha-beta heterodimers associate head-to-tail to form protofilaments running lengthwise along the microtubule wall with the beta-tubulin subunit facing the microtubule plus end conferring a structural polarity. Microtubules usually have 13 protofilaments but different protofilament numbers can be found in some organisms and specialized cells. Interacts with mgr and Vhl. The cofactor is Mg(2+).

The protein resides in the cytoplasm. It is found in the cytoskeleton. Its function is as follows. Tubulin is the major constituent of microtubules, a cylinder consisting of laterally associated linear protofilaments composed of alpha- and beta-tubulin heterodimers. Microtubules grow by the addition of GTP-tubulin dimers to the microtubule end, where a stabilizing cap forms. Below the cap, tubulin dimers are in GDP-bound state, owing to GTPase activity of alpha-tubulin. The protein is Tubulin beta-1 chain (betaTub56D) of Drosophila melanogaster (Fruit fly).